Consider the following 188-residue polypeptide: Elongation factor P (188 aa).

The protein belongs to the elongation factor P family.

The protein resides in the cytoplasm. It participates in protein biosynthesis; polypeptide chain elongation. Functionally, involved in peptide bond synthesis. Stimulates efficient translation and peptide-bond synthesis on native or reconstituted 70S ribosomes in vitro. Probably functions indirectly by altering the affinity of the ribosome for aminoacyl-tRNA, thus increasing their reactivity as acceptors for peptidyl transferase. This is Elongation factor P (efp) from Rickettsia prowazekii (strain Madrid E).